Consider the following 1346-residue polypeptide: MSVLCVLLLAFVLPLRGSSSAGSTECKTYDERSRSAGKSSPSGATLDRKVVCSNMEFRQVPSPDTFPNRTVSLILSNNKIQELLNGSFVGLSSLERLDIKNNIITHIEPGAFYGLFSLKRLDLSKNLIGCLHVDVFKGLTNLVKLNLSENKFSSLSQGIFDSLGSLKILEFDSPYLLCDCNLQWLVVWIKEKAIGVKETRCSFPRSLQGQLITTLRAETLTCDAPLELPSFQMTPSQHQIVFQGDSLPFQCMASFVDEDMQVLWYQDGKMVEPDATQGIYIEKSMVQNCSLIASALTISNIQPGFTGNWECRVRTSRGNNTRTVHIVVLESSAKYCLPDRVSNNKGEYRWPRTLAGITAYLPCKRQVTGAGIYSGSSAEDRRAWRRCDRGGQWAEDDYSRCEYMKDVTRVLYIINQMPLNLTNVVQTAQQLLAYTAEAPNFSDKVDVIFVAEMIEKIGKFAEKYKELGDVMVDISSNLLLADERVLWMAQREARACSRMVESLQRIALLRVSNGALAYSTNSPNIALEAHAIKASSFNGMTCTLFQKLSPERTVMAHHGEISPERQLSFKCNVTSNLSALALKNTIVEASLQLPPTLFSSLGSSGQAEEAVYKLHLLAFRNGKLFPPTGNSSILSDGSKRRSVVTPVMITKIEGFPLRDLLSPVNVTLRRFLQGSDAVPAFWNFSLQGGQGGWQSDGCRILHQDDNFTTVSCHSLNSYAVLMDLNRTGYNVFIFRPLHPVIYSTALVLVLCLLSVIVSYIYHHKSVRISKKCWHMLVNLCLHILLTCAVFVGGINQTYNASVCQAMGIVLHYSTLATALWSGVTARNIYKQVTRKAKRYEELDEPPPPPRPMLRFYLIGGGIPIIVCGITAAANIKNYGSQVNAPYCWMAWEPSLGAFYGPAAFIVFVDCMYFLSILIQLRRHPERRFELKEQSEEQQHLSVTEATEITPVHLESSPTAQPVPMSALENEHTFVSQLMGVAGSLTLYAALWVFGALAISQEHPADLVFACLFGALALGLGAFLVAHHCVNRQDMRRHWSQACCLIRRNYAVQVDSLLLPIAGSSGSVMTSRGNGEATKCPASSAESSCTNKSAPSLRNSTQGCKLTNLQVEAAQCKVVAPSTANGTAVLDNSLTEHSVDNEIKMHVAPIEIQYRPSSVNNNNLPGNANITGHPGRHHKNRSRAHRASRLTVLREYSYDVPTSVEGSVQSVPNKRHHHESLHARNSRRAAYLAYRERQQSQLQQDSSDAASTSVPRRSRHFSKGTRIGNGFGHGISNGGLLDGSEADVTNQTKECPKQTLTVELEVQPKSYGLNLACQNGSAKDSERLNVESSGNVKTGLWKHETTV.

Positions 1–21 (MSVLCVLLLAFVLPLRGSSSA) are cleaved as a signal peptide. The disordered stretch occupies residues 18 to 45 (SSSAGSTECKTYDERSRSAGKSSPSGAT). The Extracellular portion of the chain corresponds to 22–739 (GSTECKTYDE…NVFIFRPLHP (718 aa)). LRR repeat units lie at residues 66–90 (FPNR…SFVG), 91–114 (LSSL…AFYG), 116–138 (FSLK…VFKG), and 139–162 (LTNL…IFDS). Residues 176–223 (LLCDCNLQWLVVWIKEKAIGVKETRCSFPRSLQGQLITTLRAETLTCD) form the LRRCT domain. In terms of domain architecture, Ig-like spans 229-327 (PSFQMTPSQH…GNNTRTVHIV (99 aa)). An intrachain disulfide couples Cys-251 to Cys-311. 3 LRR repeats span residues 503–529 (LQRI…ALEA), 574–600 (TSNL…LFSS), and 611–632 (VYKL…GNSS). Residues 563–728 (PERQLSFKCN…AVLMDLNRTG (166 aa)) form the GAIN-B domain. A GPS region spans residues 679-728 (PAFWNFSLQGGQGGWQSDGCRILHQDDNFTTVSCHSLNSYAVLMDLNRTG). Cys-698 and Cys-712 form a disulfide bridge. The helical transmembrane segment at 740–760 (VIYSTALVLVLCLLSVIVSYI) threads the bilayer. Topologically, residues 761-773 (YHHKSVRISKKCW) are cytoplasmic. Residues 774–794 (HMLVNLCLHILLTCAVFVGGI) traverse the membrane as a helical segment. The Extracellular portion of the chain corresponds to 795–804 (NQTYNASVCQ). The chain crosses the membrane as a helical span at residues 805–825 (AMGIVLHYSTLATALWSGVTA). The Cytoplasmic portion of the chain corresponds to 826–854 (RNIYKQVTRKAKRYEELDEPPPPPRPMLR). Residues 855-875 (FYLIGGGIPIIVCGITAAANI) traverse the membrane as a helical segment. Residues 876-897 (KNYGSQVNAPYCWMAWEPSLGA) lie on the Extracellular side of the membrane. A helical membrane pass occupies residues 898–918 (FYGPAAFIVFVDCMYFLSILI). Topologically, residues 919–977 (QLRRHPERRFELKEQSEEQQHLSVTEATEITPVHLESSPTAQPVPMSALENEHTFVSQL) are cytoplasmic. The helical transmembrane segment at 978–998 (MGVAGSLTLYAALWVFGALAI) threads the bilayer. At 999-1005 (SQEHPAD) the chain is on the extracellular side. The chain crosses the membrane as a helical span at residues 1006 to 1026 (LVFACLFGALALGLGAFLVAH). Residues 1027-1346 (HCVNRQDMRR…TGLWKHETTV (320 aa)) are Cytoplasmic-facing. The segment covering 1157–1169 (SVNNNNLPGNANI) has biased composition (polar residues). 2 disordered regions span residues 1157 to 1188 (SVNN…RASR) and 1202 to 1284 (SVEG…DGSE). 2 stretches are compositionally biased toward basic residues: residues 1173-1187 (PGRH…HRAS) and 1212-1226 (NKRH…RNSR). Low complexity predominate over residues 1238–1252 (QSQLQQDSSDAASTS). The segment covering 1266 to 1280 (IGNGFGHGISNGGLL) has biased composition (gly residues). The PDZ-binding signature appears at 1344 to 1346 (TTV).

The protein belongs to the G-protein coupled receptor 2 family. Adhesion G-protein coupled receptor (ADGR) subfamily. Interacts (via PDZ-binding motif) with disheveled proteins; leading to the localization of dishevelled proteins to specific membrane subdomains. In terms of tissue distribution, ubiquitously expressed at very low levels.

It localises to the cell membrane. Orphan receptor that acts as a critical modulator of planar cell polarity during gastrulation. Controls the localization of dishevelled. This is Adhesion G protein-coupled receptor A3 (adgra3) from Danio rerio (Zebrafish).